A 166-amino-acid chain; its full sequence is NADH-quinone oxidoreductase subunit I (166 aa).

4Fe-4S ferredoxin-type domains are found at residues Leu57–Glu87 and Thr97–Ile126. The [4Fe-4S] cluster site is built by Cys67, Cys70, Cys73, Cys77, Cys106, Cys109, Cys112, and Cys116.

Belongs to the complex I 23 kDa subunit family. In terms of assembly, NDH-1 is composed of 14 different subunits. Subunits NuoA, H, J, K, L, M, N constitute the membrane sector of the complex. [4Fe-4S] cluster serves as cofactor.

The protein localises to the cell inner membrane. The enzyme catalyses a quinone + NADH + 5 H(+)(in) = a quinol + NAD(+) + 4 H(+)(out). Functionally, NDH-1 shuttles electrons from NADH, via FMN and iron-sulfur (Fe-S) centers, to quinones in the respiratory chain. The immediate electron acceptor for the enzyme in this species is believed to be ubiquinone. Couples the redox reaction to proton translocation (for every two electrons transferred, four hydrogen ions are translocated across the cytoplasmic membrane), and thus conserves the redox energy in a proton gradient. In Legionella pneumophila (strain Lens), this protein is NADH-quinone oxidoreductase subunit I.